The sequence spans 72 residues: MAKDDVIQMQGEVIENLPNATFRVKLENGHVVLGHISGKMRMHYIRILPGDKVTVELTPYDLSRARIVFRAK.

The 72-residue stretch at 1–72 (MAKDDVIQMQ…SRARIVFRAK (72 aa)) folds into the S1-like domain.

Belongs to the IF-1 family. In terms of assembly, component of the 30S ribosomal translation pre-initiation complex which assembles on the 30S ribosome in the order IF-2 and IF-3, IF-1 and N-formylmethionyl-tRNA(fMet); mRNA recruitment can occur at any time during PIC assembly.

The protein localises to the cytoplasm. Its function is as follows. One of the essential components for the initiation of protein synthesis. Stabilizes the binding of IF-2 and IF-3 on the 30S subunit to which N-formylmethionyl-tRNA(fMet) subsequently binds. Helps modulate mRNA selection, yielding the 30S pre-initiation complex (PIC). Upon addition of the 50S ribosomal subunit IF-1, IF-2 and IF-3 are released leaving the mature 70S translation initiation complex. The polypeptide is Translation initiation factor IF-1 (Burkholderia thailandensis (strain ATCC 700388 / DSM 13276 / CCUG 48851 / CIP 106301 / E264)).